A 125-amino-acid polypeptide reads, in one-letter code: uncharacterized protein (125 aa).

Residues 7–29 (NCMFLYVYTDVCVRLCASIFYIM) traverse the membrane as a helical segment.

It is found in the membrane. This is an uncharacterized protein from Saccharomyces cerevisiae (strain ATCC 204508 / S288c) (Baker's yeast).